A 494-amino-acid polypeptide reads, in one-letter code: MLTSGLLLVAAVAFLSVLVLMSVWKQRKLSGKLPPGPTPLPFVGNFLQLNTEQMYNSLMKISQRYGPVFTIYLGSRRIVVLCGQETVKEALVDQAEEFSGRGEQATFDWLFKGYGIAFSSGERAKQLRRFSITTLRDFGVGKRGIEERIQEEAGFLIDSFRKTNGAFIDPTFYLSRTVSNVISSIVFGDRFDYEDKEFLSLLRMMLGSLQFTATSMGQVYEMFSSVMKHLPGPQQQAFKELQGLEDFITKKVEHNQRTLDPNSPRDFIDSFLIRMLEEKKNPNTEFYMKNLVLTTLNLFFAGTETVSTTLRYGFLLLMKYPDIEAKVHEEIDRVIGRNRQPKYEDRMKMPYTEAVIHEIQRFADLIPMGLARRVTKDTKFRDFLLPKGTEVFPMLGSVLKDPKFFSNPKDFNPKHFLDDKGQFKKSDAFVPFSIGKRYCFGEGLARMELFLFLTNIMQNFHFKSTQEPQDIDVSPRLVGFVTIPPTYTMSFLSR.

S131 carries the post-translational modification Phosphoserine. Residue K379 is modified to N6-acetyllysine. C439 contacts heme.

It belongs to the cytochrome P450 family. Heme serves as cofactor. Kidney and lung. Expressed in liver, with a strong circadian rhythmicity. Circadian expression is regulated by DBP.

Its subcellular location is the endoplasmic reticulum membrane. It is found in the microsome membrane. The enzyme catalyses an organic molecule + reduced [NADPH--hemoprotein reductase] + O2 = an alcohol + oxidized [NADPH--hemoprotein reductase] + H2O + H(+). Functionally, highly active in the 15-alpha-hydroxylation of testosterone. Also active in the 15-alpha-hydroxylation of progesterone and androstenedione. Little or no activity on corticosterone, pregnenolone, dehydroepiandrosterone, estradiol or estriol. The protein is Cytochrome P450 2A4 (Cyp2a4) of Mus musculus (Mouse).